The chain runs to 107 residues: MQRFLCLVACSVVLLVLGIVADDEIGQVPEGGWTRGNKSNGERCKFNQHCHSKCCVLSERGKPRVCASKALEGESCNAGQIKGGYHARFCPCALGNGKCIKNICQLL.

Positions 1–21 (MQRFLCLVACSVVLLVLGIVA) are cleaved as a signal peptide.

The protein belongs to the scoloptoxin-18 family. In terms of processing, contains 5 disulfide bonds. As to expression, expressed by the venom gland.

It is found in the secreted. In Ethmostigmus rubripes (Giant centipede), this protein is U-scoloptoxin(18)-Er1a.